The chain runs to 304 residues: Nod factor export ATP-binding protein I (304 aa).

The ABC transporter domain maps to 6–236 (IDFRNVEKRY…EIGCDVIEIY (231 aa)). 38–45 (GPNGAGKT) is an ATP binding site.

It belongs to the ABC transporter superfamily. Lipooligosaccharide exporter (TC 3.A.1.102) family. The complex is composed of two ATP-binding proteins (NodI) and two transmembrane proteins (NodJ).

The protein localises to the cell inner membrane. In terms of biological role, part of the ABC transporter complex NodIJ involved in the export of the nodulation factors (Nod factors), the bacterial signal molecules that induce symbiosis and subsequent nodulation induction. Nod factors are LCO (lipo-chitin oligosaccharide), a modified beta-1,4-linked N-acetylglucosamine oligosaccharide. This subunit is responsible for energy coupling to the transport system. The protein is Nod factor export ATP-binding protein I of Burkholderia orbicola (strain AU 1054).